Here is a 238-residue protein sequence, read N- to C-terminus: Fmr1 neighbor protein (238 aa).

Positions 1–30 (MPSDRRPSQRRNRSKSRDYRGARSKVTRAD) are disordered. Over 1–79 (MPSDRRPSQR…CLQYLWARRH (79 aa)) the chain is Cytoplasmic. The segment covering 15 to 30 (KSRDYRGARSKVTRAD) has biased composition (basic and acidic residues). Residues 80-100 (LGLLLLLFWTLVILFRPVNTA) form a helical membrane-spanning segment. Over 101–178 (KLPILAEAAE…VRDKPTQVLR (78 aa)) the chain is Extracellular. The 59-residue stretch at 118 to 176 (MLDFFFPTACIIRDNQVVVACNNQPYLSESECLKSKCCSSTSGTIIKCYAPVRDKPTQV) folds into the P-type domain. A helical membrane pass occupies residues 179–199 (VFGLAAISILVLGFLPMCCCS). The Cytoplasmic segment spans residues 200–238 (MCWRRKRMNRMLKVLKKQKSKGKKPKGRKASEERALLSH). Residues 214 to 227 (LKKQKSKGKKPKGR) show a composition bias toward basic residues. Positions 214 to 238 (LKKQKSKGKKPKGRKASEERALLSH) are disordered. Over residues 228-238 (KASEERALLSH) the composition is skewed to basic and acidic residues.

It localises to the membrane. This Mus musculus (Mouse) protein is Fmr1 neighbor protein.